We begin with the raw amino-acid sequence, 227 residues long: Phosphoglycolate phosphatase (227 aa).

The active-site Nucleophile is D13. Residues D13, D15, and D176 each coordinate Mg(2+).

Belongs to the HAD-like hydrolase superfamily. CbbY/CbbZ/Gph/YieH family. Mg(2+) serves as cofactor.

The catalysed reaction is 2-phosphoglycolate + H2O = glycolate + phosphate. It participates in organic acid metabolism; glycolate biosynthesis; glycolate from 2-phosphoglycolate: step 1/1. Functionally, specifically catalyzes the dephosphorylation of 2-phosphoglycolate. Is involved in the dissimilation of the intracellular 2-phosphoglycolate formed during the DNA repair of 3'-phosphoglycolate ends, a major class of DNA lesions induced by oxidative stress. The sequence is that of Phosphoglycolate phosphatase from Nitrosospira multiformis (strain ATCC 25196 / NCIMB 11849 / C 71).